A 432-amino-acid chain; its full sequence is Queuine tRNA-ribosyltransferase accessory subunit 2 (432 aa).

Zn(2+) is bound by residues cysteine 329, cysteine 331, cysteine 334, and histidine 360. Residues 390–432 form a disordered region; sequence GQKSLPPYEPPKEEKLPMPAAQKAELMEPMEDLGEKQNKKQRA. Residues 422 to 432 show a composition bias toward basic and acidic residues; it reads LGEKQNKKQRA.

It belongs to the queuine tRNA-ribosyltransferase family. QTRT2 subfamily. Heterodimer of a catalytic subunit and an accessory subunit. It depends on Zn(2+) as a cofactor.

The protein resides in the cytoplasm. In terms of biological role, non-catalytic subunit of the queuine tRNA-ribosyltransferase (TGT) that catalyzes the base-exchange of a guanine (G) residue with queuine (Q) at position 34 (anticodon wobble position) in tRNAs with GU(N) anticodons (tRNA-Asp, -Asn, -His and -Tyr), resulting in the hypermodified nucleoside queuosine (7-(((4,5-cis-dihydroxy-2-cyclopenten-1-yl)amino)methyl)-7-deazaguanosine). In Anopheles gambiae (African malaria mosquito), this protein is Queuine tRNA-ribosyltransferase accessory subunit 2.